Reading from the N-terminus, the 336-residue chain is Holliday junction branch migration complex subunit RuvB (336 aa).

Residues 4–184 (ADRLISASGG…FGIVQRLEFY (181 aa)) are large ATPase domain (RuvB-L). Residues Ile-23, Arg-24, Gly-65, Lys-68, Thr-69, Thr-70, 131–133 (EDY), Arg-174, Tyr-184, and Arg-221 contribute to the ATP site. Thr-69 provides a ligand contact to Mg(2+). The small ATPAse domain (RuvB-S) stretch occupies residues 185–255 (NVKDLTDIVA…IAARAMDMLD (71 aa)). The interval 258–336 (NEGFDFMDRK…HFGLQRPDEG (79 aa)) is head domain (RuvB-H). 2 residues coordinate DNA: Arg-313 and Arg-318.

This sequence belongs to the RuvB family. As to quaternary structure, homohexamer. Forms an RuvA(8)-RuvB(12)-Holliday junction (HJ) complex. HJ DNA is sandwiched between 2 RuvA tetramers; dsDNA enters through RuvA and exits via RuvB. An RuvB hexamer assembles on each DNA strand where it exits the tetramer. Each RuvB hexamer is contacted by two RuvA subunits (via domain III) on 2 adjacent RuvB subunits; this complex drives branch migration. In the full resolvosome a probable DNA-RuvA(4)-RuvB(12)-RuvC(2) complex forms which resolves the HJ.

The protein localises to the cytoplasm. The catalysed reaction is ATP + H2O = ADP + phosphate + H(+). In terms of biological role, the RuvA-RuvB-RuvC complex processes Holliday junction (HJ) DNA during genetic recombination and DNA repair, while the RuvA-RuvB complex plays an important role in the rescue of blocked DNA replication forks via replication fork reversal (RFR). RuvA specifically binds to HJ cruciform DNA, conferring on it an open structure. The RuvB hexamer acts as an ATP-dependent pump, pulling dsDNA into and through the RuvAB complex. RuvB forms 2 homohexamers on either side of HJ DNA bound by 1 or 2 RuvA tetramers; 4 subunits per hexamer contact DNA at a time. Coordinated motions by a converter formed by DNA-disengaged RuvB subunits stimulates ATP hydrolysis and nucleotide exchange. Immobilization of the converter enables RuvB to convert the ATP-contained energy into a lever motion, pulling 2 nucleotides of DNA out of the RuvA tetramer per ATP hydrolyzed, thus driving DNA branch migration. The RuvB motors rotate together with the DNA substrate, which together with the progressing nucleotide cycle form the mechanistic basis for DNA recombination by continuous HJ branch migration. Branch migration allows RuvC to scan DNA until it finds its consensus sequence, where it cleaves and resolves cruciform DNA. This Aeromonas hydrophila subsp. hydrophila (strain ATCC 7966 / DSM 30187 / BCRC 13018 / CCUG 14551 / JCM 1027 / KCTC 2358 / NCIMB 9240 / NCTC 8049) protein is Holliday junction branch migration complex subunit RuvB.